A 459-amino-acid chain; its full sequence is MEEDYQQPRFTIGRQSSMAPEKIPEPSVHSEEEVFEDGEEIDGGVRLMYLANEGDIEGIKELIDSGIDANYRDIDDRTALHVAACQGLKDVVELLLDRKAEVDPKDRWGSTPFADAIFYKNIDVIKILEIHGAKHPMAPMHVKTAREVPEYEINPSELDFTQSKEITKGTYCMAMWRGIQVAVKKLDDEVLSDDDQVRKFHDELALLQRLRHPNIVQFLGAVTQSNPMMIVTEYLPRGDLRELLKRKGQLKPATAVRYALDIARGMSYLHEIKGDPIIHRDLEPSNILRDDSGHLKVADFGVSKLVTVKEDKPFTCQDISCRYIAPEVFTSEEYDTKADVFSFALIVQEMIEGRMPFAEKEDSEASEAYAGKHRPLFKAPSKNYPHGLKTLIEECWHEKPAKRPTFREIIKRLESILHHMGHKRQWRMRPLTCFQNFEHKKKHNWDLSSHDGSSSGSHL.

A disordered region spans residues 1 to 30; it reads MEEDYQQPRFTIGRQSSMAPEKIPEPSVHS. ANK repeat units follow at residues 42-71, 75-104, and 108-137; these read DGGV…DANY, DDRT…EVDP, and WGST…KHPM. The 316-residue stretch at 102–417 folds into the Protein kinase domain; the sequence is VDPKDRWGST…EIIKRLESIL (316 aa). ATP-binding positions include 108-116 and Lys-184; that span reads WGSTPFADA. Asp-281 acts as the Proton acceptor in catalysis.

This sequence belongs to the protein kinase superfamily. Ser/Thr protein kinase family. Interacts with BLUS1, PHOT1 and PHOT2. As to expression, accumulates in leaves, stems, petioles and roots, especially in guard cells.

It localises to the cytoplasm. Its subcellular location is the cytosol. The enzyme catalyses L-seryl-[protein] + ATP = O-phospho-L-seryl-[protein] + ADP + H(+). It catalyses the reaction L-threonyl-[protein] + ATP = O-phospho-L-threonyl-[protein] + ADP + H(+). In terms of biological role, serine/threonine protein kinase that phosphorylates proteins on serine and threonine residues. Mediates blue light-dependent stomatal opening in guard cells by promoting plasma membrane-type ATPases (AHA1 and AHA2) phosphorylation. This Arabidopsis thaliana (Mouse-ear cress) protein is Serine/threonine-protein kinase 12.